A 578-amino-acid chain; its full sequence is Proteasome-associated ATPase (578 aa).

Residues 35–84 adopt a coiled-coil conformation; the sequence is RHLTALEEQLGAARTRLAQVSAQNDRLATTLREARDQIVALKAEVDRLGQ. Residue 266–271 participates in ATP binding; that stretch reads GCGKTL. Positions 577-578 are docks into pockets in the proteasome alpha-ring; the sequence is YL.

The protein belongs to the AAA ATPase family. As to quaternary structure, homohexamer. Assembles into a hexameric ring structure that caps the 20S proteasome core. Strongly interacts with the prokaryotic ubiquitin-like protein Pup through a hydrophobic interface; the interacting region of ARC lies in its N-terminal coiled-coil domain. There is one Pup binding site per ARC hexamer ring. Upon ATP-binding, the C-terminus of ARC interacts with the alpha-rings of the proteasome core, possibly by binding to the intersubunit pockets.

It participates in protein degradation; proteasomal Pup-dependent pathway. Functionally, ATPase which is responsible for recognizing, binding, unfolding and translocation of pupylated proteins into the bacterial 20S proteasome core particle. May be essential for opening the gate of the 20S proteasome via an interaction with its C-terminus, thereby allowing substrate entry and access to the site of proteolysis. Thus, the C-termini of the proteasomal ATPase may function like a 'key in a lock' to induce gate opening and therefore regulate proteolysis. This Kineococcus radiotolerans (strain ATCC BAA-149 / DSM 14245 / SRS30216) protein is Proteasome-associated ATPase.